Reading from the N-terminus, the 520-residue chain is Putative tyrosine carboxypeptidase MATCAP2 (520 aa).

Residues 116 to 153 (EEKKYHSQKQSSSTYSKRCRKPSKSPNTSRSKDPRRMK) are disordered. H331 lines the Zn(2+) pocket. E332 serves as the catalytic Nucleophile. Zn(2+) contacts are provided by H336 and E367.

The cofactor is Zn(2+).

In terms of biological role, putative tyrosine carboxypeptidase. The protein is Putative tyrosine carboxypeptidase MATCAP2 of Homo sapiens (Human).